The chain runs to 470 residues: NADH-quinone oxidoreductase subunit D (470 aa).

Over residues 1–18 the composition is skewed to low complexity; the sequence is MTPSTSTPHTSTAPHTST. The segment at 1 to 37 is disordered; sequence MTPSTSTPHTSTAPHTSTGQSTDGAAQPGDGSSAYEA.

It belongs to the complex I 49 kDa subunit family. As to quaternary structure, NDH-1 is composed of 14 different subunits. Subunits NuoB, C, D, E, F, and G constitute the peripheral sector of the complex.

Its subcellular location is the cell membrane. It carries out the reaction a quinone + NADH + 5 H(+)(in) = a quinol + NAD(+) + 4 H(+)(out). In terms of biological role, NDH-1 shuttles electrons from NADH, via FMN and iron-sulfur (Fe-S) centers, to quinones in the respiratory chain. The immediate electron acceptor for the enzyme in this species is believed to be a menaquinone. Couples the redox reaction to proton translocation (for every two electrons transferred, four hydrogen ions are translocated across the cytoplasmic membrane), and thus conserves the redox energy in a proton gradient. In Frankia alni (strain DSM 45986 / CECT 9034 / ACN14a), this protein is NADH-quinone oxidoreductase subunit D.